A 505-amino-acid chain; its full sequence is DEAD-box ATP-dependent RNA helicase 8 (505 aa).

Positions 1-85 (MNNRGRYPPG…GQIPGGNSNG (85 aa)) are disordered. Positions 20-31 (PNPNYQSRSGYQ) are enriched in polar residues. The span at 43 to 71 (NYAQNHQQQFQQAPSQPHQYQQQQQQQQQ) shows a compositional bias: low complexity. Residues 131–159 (NEFEDYFLKRELLMGIYEKGFERPSPIQE) carry the Q motif motif. The Helicase ATP-binding domain maps to 162-332 (IPIALTGRDI…DRFLTNPYVI (171 aa)). ATP is bound at residue 175-182 (AKNGTGKT). The residue at position 237 (Thr-237) is a Phosphothreonine. The short motif at 280–283 (DEAD) is the DEAD box element. In terms of domain architecture, Helicase C-terminal spans 342 to 502 (GITQFYAFVE…QIPPHIDQAI (161 aa)).

The protein belongs to the DEAD box helicase family. DDX6/DHH1 subfamily.

The protein localises to the cytoplasm. It is found in the P-body. It catalyses the reaction ATP + H2O = ADP + phosphate + H(+). Its function is as follows. ATP-dependent RNA helicase involved in mRNA turnover, and more specifically in mRNA decapping. This is DEAD-box ATP-dependent RNA helicase 8 (RH8) from Arabidopsis thaliana (Mouse-ear cress).